We begin with the raw amino-acid sequence, 93 residues long: Small ribosomal subunit protein uS19 (93 aa).

This sequence belongs to the universal ribosomal protein uS19 family.

Functionally, protein S19 forms a complex with S13 that binds strongly to the 16S ribosomal RNA. The polypeptide is Small ribosomal subunit protein uS19 (Arthrobacter sp. (strain FB24)).